Consider the following 154-residue polypeptide: Transmembrane protein 35B (154 aa).

Residues 1–22 (MALLLSVLRVLLGGFFALVGLA) form the signal peptide. 3 helical membrane-spanning segments follow: residues 63-83 (IAVG…PPML), 85-105 (EISN…LAAL), and 112-132 (CIPA…QLLA).

It belongs to the DoxX family.

The protein localises to the membrane. The sequence is that of Transmembrane protein 35B from Homo sapiens (Human).